We begin with the raw amino-acid sequence, 136 residues long: Nucleoside diphosphate kinase (136 aa).

ATP is bound by residues lysine 10, phenylalanine 58, arginine 86, threonine 92, arginine 104, and asparagine 114. Residue histidine 117 is the Pros-phosphohistidine intermediate of the active site.

This sequence belongs to the NDK family. In terms of assembly, homotetramer. Mg(2+) serves as cofactor.

It is found in the cytoplasm. The enzyme catalyses a 2'-deoxyribonucleoside 5'-diphosphate + ATP = a 2'-deoxyribonucleoside 5'-triphosphate + ADP. The catalysed reaction is a ribonucleoside 5'-diphosphate + ATP = a ribonucleoside 5'-triphosphate + ADP. Its function is as follows. Major role in the synthesis of nucleoside triphosphates other than ATP. The ATP gamma phosphate is transferred to the NDP beta phosphate via a ping-pong mechanism, using a phosphorylated active-site intermediate. This Saccharopolyspora erythraea (strain ATCC 11635 / DSM 40517 / JCM 4748 / NBRC 13426 / NCIMB 8594 / NRRL 2338) protein is Nucleoside diphosphate kinase.